The following is a 262-amino-acid chain: Thiamine thiazole synthase (262 aa).

NAD(+) contacts are provided by residues alanine 36, 55–56, glycine 63, valine 127, and 154–156; these read EK and HVD. Fe cation contacts are provided by aspartate 156 and histidine 171. Position 224 (methionine 224) interacts with NAD(+). A glycine-binding site is contributed by arginine 234.

The protein belongs to the THI4 family. Homooctamer; tetramer of dimers. Fe(2+) serves as cofactor.

The catalysed reaction is hydrogen sulfide + glycine + NAD(+) = ADP-5-ethyl-4-methylthiazole-2-carboxylate + nicotinamide + 3 H2O + H(+). The protein operates within cofactor biosynthesis; thiamine diphosphate biosynthesis. Involved in the biosynthesis of the thiazole moiety of thiamine. Catalyzes the conversion of NAD and glycine to adenosine diphosphate 5-(2-hydroxyethyl)-4-methylthiazole-2-carboxylate (ADT), an adenylated thiazole intermediate, using free sulfide as a source of sulfur. The protein is Thiamine thiazole synthase of Methanothrix thermoacetophila (strain DSM 6194 / JCM 14653 / NBRC 101360 / PT) (Methanosaeta thermophila).